Here is a 261-residue protein sequence, read N- to C-terminus: 5'-nucleotidase SurE (261 aa).

Asp17, Asp18, Ser48, and Asn104 together coordinate a divalent metal cation.

This sequence belongs to the SurE nucleotidase family. A divalent metal cation serves as cofactor.

Its subcellular location is the cytoplasm. The enzyme catalyses a ribonucleoside 5'-phosphate + H2O = a ribonucleoside + phosphate. In terms of biological role, nucleotidase that shows phosphatase activity on nucleoside 5'-monophosphates. The chain is 5'-nucleotidase SurE from Deinococcus geothermalis (strain DSM 11300 / CIP 105573 / AG-3a).